A 163-amino-acid chain; its full sequence is Glyoxalase domain-containing protein 5 (163 aa).

The VOC domain occupies 41 to 161 (HLDHLVLTVR…DDNLIEVSNY (121 aa)).

Belongs to the glyoxalase I family.

The chain is Glyoxalase domain-containing protein 5 (glod5) from Danio rerio (Zebrafish).